The chain runs to 325 residues: MPDSGLLYKEWRQNKVALVITILVFILGNPLSILNMYLIYQGCVTGKENWVGPCVFSVDYLNSSFISLFWIWGVVLAVSQLGIERSKSFFDFTLSLPYTRGQIFHAKFLTGGMVIVVPQLIGYVLSVLLIMLLKPDQAVYFHNYSLGMIIVSMLAYSLVMAGGALTGNSFAQLLVSFTVAISPFLLISLPVINLEILFGGSIDFIHGPVPKWVQYFIPIIYVDSKWAENSPYYLVIPAIMTIIFYIIGYISFVKMSNERNGYFFLWKPLNRPVQIIVIIIGIMGFGYFGFTASESFAGYLIGMGTGAVIGFLISYFAIYKKMKLL.

A run of 8 helical transmembrane segments spans residues 16-36, 63-83, 113-133, 146-166, 179-199, 233-253, 272-292, and 298-318; these read VALV…ILNM, SSFI…QLGI, MVIV…IMLL, LGMI…GALT, VAIS…ILFG, YLVI…ISFV, PVQI…GFTA, and GYLI…YFAI.

It belongs to the ABC-5 integral membrane protein family. As to quaternary structure, the complex is composed of 2 ATP-binding proteins (YtrB and YtrE), 2 transmembrane proteins (YtrC and YtrD) and a solute-binding protein (YtrF).

The protein localises to the cell membrane. In terms of biological role, part of the ABC transporter complex YtrBCDEF that plays a role in acetoin utilization during stationary phase and sporulation. In Bacillus subtilis (strain 168), this protein is Probable ABC transporter permease YtrD (ytrD).